A 288-amino-acid chain; its full sequence is Proteasome assembly chaperone 1 (288 aa).

The disordered stretch occupies residues 1-33 (MATFFGEVQSVFSRAVDEEEEDEDDDEEEEEDR). Over residues 17-33 (DEEEEDEDDDEEEEEDR) the composition is skewed to acidic residues.

Belongs to the PSMG1 family. In terms of assembly, forms a heterodimer with psmg2. In terms of processing, degraded by the proteasome upon completion of 20S proteasome maturation.

It localises to the cytoplasm. Its subcellular location is the endoplasmic reticulum. Chaperone protein which promotes assembly of the 20S proteasome as part of a heterodimer with psmg2. This chain is Proteasome assembly chaperone 1, found in Xenopus laevis (African clawed frog).